The primary structure comprises 58 residues: UPF0391 membrane protein Maqu_2901 (58 aa).

A run of 2 helical transmembrane segments spans residues 4 to 24 (WAIV…GGIA) and 28 to 48 (AGFA…SLVV).

Belongs to the UPF0391 family.

The protein localises to the cell membrane. The sequence is that of UPF0391 membrane protein Maqu_2901 from Marinobacter nauticus (strain ATCC 700491 / DSM 11845 / VT8) (Marinobacter aquaeolei).